Reading from the N-terminus, the 159-residue chain is Ribosomal RNA large subunit methyltransferase H (159 aa).

S-adenosyl-L-methionine contacts are provided by residues Leu76, Gly108, and 127-132 (FSKMTF).

Belongs to the RNA methyltransferase RlmH family. Homodimer.

The protein localises to the cytoplasm. It carries out the reaction pseudouridine(1915) in 23S rRNA + S-adenosyl-L-methionine = N(3)-methylpseudouridine(1915) in 23S rRNA + S-adenosyl-L-homocysteine + H(+). Specifically methylates the pseudouridine at position 1915 (m3Psi1915) in 23S rRNA. This chain is Ribosomal RNA large subunit methyltransferase H, found in Lachnospira eligens (strain ATCC 27750 / DSM 3376 / VPI C15-48 / C15-B4) (Eubacterium eligens).